The primary structure comprises 400 residues: Jasmonate-induced oxygenase 1 (400 aa).

The Fe2OG dioxygenase domain maps to 248–349; sequence DVGACLRVNY…RVSLAFFYNP (102 aa). Arg254 serves as a coordination point for jasmonate. Asn256 and Tyr258 together coordinate 2-oxoglutarate. Residues His273, Asp275, and His330 each coordinate Fe cation. Arg340 and Ser342 together coordinate 2-oxoglutarate. Jasmonate is bound by residues Arg379 and Arg383.

Belongs to the iron/ascorbate-dependent oxidoreductase family. It depends on L-ascorbate as a cofactor. The cofactor is Fe(2+).

It catalyses the reaction jasmonate + 2-oxoglutarate + O2 = (1R,2R)-12-hydroxyjasmonate + succinate + CO2. Functionally, 2-oxoglutarate-dependent dioxygenase involved in the oxidation of jasmonate (JA), a stress-induced phytohormone synthesized in response to attack by pathogens and herbivores, which triggers the activation of defense responses via the JA-mediated signaling pathway. Converts JA to 12-hydroxyjasmonate (12OH-JA), an inactive form of JA. Prevents over-accumulation of JA and indirectly its bioactive form JA-Ile under stress response. Acts as a negative regulator of JA-mediated defense signaling, by contributing to 12OH-JA accumulation, which represses JA defense responses upon infection by the fungal pathogen Botrytis cinerea and the herbivorous caterpillar Mamestra brassicae. This is Jasmonate-induced oxygenase 1 from Arabidopsis thaliana (Mouse-ear cress).